Consider the following 1068-residue polypeptide: Retinoblastoma-like protein 1 (1068 aa).

Position 332 is a phosphothreonine; by CDK2 (T332). T369 is modified (phosphothreonine; by CDK4). Position 385 is a phosphothreonine; by CDK2 (T385). Residues 385-584 form a domain A region; it reads TPVASATQSV…WEALQVSANK (200 aa). Positions 385-949 are pocket; binds T and E1A; that stretch reads TPVASATQSV…GRVKSFALKY (565 aa). A spacer region spans residues 585 to 780; it reads VPTCEEVIFP…AQEVHSTGIN (196 aa). Phosphoserine; by CDK2 and CDK4 is present on S640. 2 positions are modified to phosphoserine: S650 and S749. S762 bears the Phosphoserine; by CDK2 mark. The domain B stretch occupies residues 781-949; it reads RPKRTGSLAL…GRVKSFALKY (169 aa). Phosphoserine; by CDK2 and CDK4 is present on residues S964 and S975. A Phosphoserine; by CDK2 modification is found at S988. Phosphothreonine; by CDK2 is present on T997. S1009 bears the Phosphoserine; by CDK2 mark. At S1041 the chain carries Phosphoserine.

It belongs to the retinoblastoma protein (RB) family. In terms of assembly, component of the DREAM complex (also named LINC complex) at least composed of E2F4, E2F5, LIN9, LIN37, LIN52, LIN54, MYBL1, MYBL2, RBL1, RBL2, RBBP4, TFDP1 and TFDP2. The complex exists in quiescent cells where it represses cell cycle-dependent genes. It dissociates in S phase when LIN9, LIN37, LIN52 and LIN54 form a subcomplex that binds to MYBL2. Interacts with AATF. Interacts with KDM5A. Interacts with KMT5B and KMT5C. Interacts with USP4. Interacts with RBBP9. (Microbial infection) Interacts with SV40 and JC virus large T antigens. Large T antigen, but not E1A, binds only to the unphosphorylated form. As to quaternary structure, (Microbial infection) Interacts with JC virus small t antigen. In terms of processing, cell-cycle arrest properties are inactivated by phosphorylation on Thr-332, Ser-640, Ser-964 and Ser-975 by CDK4.

It localises to the nucleus. In terms of biological role, key regulator of entry into cell division. Directly involved in heterochromatin formation by maintaining overall chromatin structure and, in particular, that of constitutive heterochromatin by stabilizing histone methylation. Recruits and targets histone methyltransferases KMT5B and KMT5C, leading to epigenetic transcriptional repression. Controls histone H4 'Lys-20' trimethylation. Probably acts as a transcription repressor by recruiting chromatin-modifying enzymes to promoters. Potent inhibitor of E2F-mediated trans-activation. May act as a tumor suppressor. This Homo sapiens (Human) protein is Retinoblastoma-like protein 1 (RBL1).